The sequence spans 354 residues: D-alanine--D-alanine ligase (354 aa).

The 206-residue stretch at 133–338 (KHLFAQAGLP…YSDLIEQLVE (206 aa)) folds into the ATP-grasp domain. An ATP-binding site is contributed by 166–221 (EKELGYPCFVKPANLGSSVGISKCRNREELEKAFELAFEYDRKIVVEEGIAGREIE). Mg(2+)-binding residues include aspartate 292, glutamate 305, and asparagine 307.

The protein belongs to the D-alanine--D-alanine ligase family. Mg(2+) is required as a cofactor. It depends on Mn(2+) as a cofactor.

The protein localises to the cytoplasm. It carries out the reaction 2 D-alanine + ATP = D-alanyl-D-alanine + ADP + phosphate + H(+). Its pathway is cell wall biogenesis; peptidoglycan biosynthesis. Cell wall formation. In Bacillus velezensis (strain DSM 23117 / BGSC 10A6 / LMG 26770 / FZB42) (Bacillus amyloliquefaciens subsp. plantarum), this protein is D-alanine--D-alanine ligase.